A 116-amino-acid polypeptide reads, in one-letter code: Heme-degrading monooxygenase (116 aa).

Residues 2–92 (VIVTNTSKIT…EYILENKISF (91 aa)) form the ABM domain. Asn6 contacts Fe cation. His76 lines the heme pocket.

This sequence belongs to the antibiotic biosynthesis monooxygenase family. Heme-degrading monooxygenase IsdG subfamily. In terms of assembly, homodimer.

The protein resides in the cytoplasm. It catalyses the reaction heme b + 3 reduced [NADPH--hemoprotein reductase] + 3 O2 = biliverdin IXalpha + CO + Fe(2+) + 3 oxidized [NADPH--hemoprotein reductase] + 3 H2O + H(+). Functionally, allows bacterial pathogens to use the host heme as an iron source. Catalyzes the oxidative degradation of the heme macrocyclic porphyrin ring to the biliverdin in the presence of a suitable electron donor such as ascorbate or NADPH--cytochrome P450 reductase, with subsequent release of free iron. The sequence is that of Heme-degrading monooxygenase from Halalkalibacterium halodurans (strain ATCC BAA-125 / DSM 18197 / FERM 7344 / JCM 9153 / C-125) (Bacillus halodurans).